The sequence spans 153 residues: Ribosome maturation factor RimP (153 aa).

This sequence belongs to the RimP family.

It localises to the cytoplasm. Required for maturation of 30S ribosomal subunits. In Clostridium tetani (strain Massachusetts / E88), this protein is Ribosome maturation factor RimP.